A 72-amino-acid polypeptide reads, in one-letter code: DNA-directed RNA polymerase subunit Rpo10 (72 aa).

Zn(2+) is bound by residues cysteine 7, cysteine 10, cysteine 45, and cysteine 46.

Belongs to the archaeal Rpo10/eukaryotic RPB10 RNA polymerase subunit family. Part of the RNA polymerase complex. Zn(2+) is required as a cofactor.

The protein localises to the cytoplasm. The enzyme catalyses RNA(n) + a ribonucleoside 5'-triphosphate = RNA(n+1) + diphosphate. DNA-dependent RNA polymerase (RNAP) catalyzes the transcription of DNA into RNA using the four ribonucleoside triphosphates as substrates. The polypeptide is DNA-directed RNA polymerase subunit Rpo10 (Methanopyrus kandleri (strain AV19 / DSM 6324 / JCM 9639 / NBRC 100938)).